The primary structure comprises 1905 residues: Low-density lipoprotein receptor-related protein 4 (1905 aa).

An N-terminal signal peptide occupies residues 1–20 (MRRWWGALLLGALLCAHGIA). The Extracellular portion of the chain corresponds to 21 to 1725 (SSLECACGRS…AAPGEGLHVS (1705 aa)). LDL-receptor class A domains lie at 26–67 (ACGR…DGCT), 70–106 (TCSP…QDCP), 109–144 (ECEE…EQCD), 147–183 (KCSD…ESCP), 190–226 (PCNL…SDCS), 230–266 (PCRS…RNCT), 269–305 (MCTA…ENCE), and 311–350 (QCAS…QNCR). Disulfide bonds link cysteine 27–cysteine 44, cysteine 34–cysteine 57, cysteine 51–cysteine 66, cysteine 71–cysteine 83, cysteine 78–cysteine 96, cysteine 90–cysteine 105, cysteine 110–cysteine 122, cysteine 117–cysteine 135, cysteine 129–cysteine 143, cysteine 148–cysteine 160, cysteine 155–cysteine 173, cysteine 167–cysteine 182, cysteine 191–cysteine 203, cysteine 198–cysteine 216, cysteine 210–cysteine 225, cysteine 231–cysteine 243, cysteine 238–cysteine 256, cysteine 250–cysteine 265, cysteine 270–cysteine 282, cysteine 277–cysteine 295, cysteine 289–cysteine 304, cysteine 312–cysteine 324, cysteine 319–cysteine 337, cysteine 331–cysteine 349, cysteine 358–cysteine 369, cysteine 365–cysteine 378, cysteine 380–cysteine 393, cysteine 399–cysteine 409, cysteine 405–cysteine 418, and cysteine 420–cysteine 433. The N-linked (GlcNAc...) asparagine glycan is linked to asparagine 264. The 41-residue stretch at 354–394 (GEENCNVNNGGCAQKCQMVRGAVQCTCHTGYRLTEDGRTCQ) folds into the EGF-like 1; atypical domain. An EGF-like 2; calcium-binding domain is found at 395-434 (DVNECAEEGYCSQGCTNTEGAFQCWCEAGYELRPDRRSCK). 5 LDL-receptor class B repeats span residues 480–522 (ELVF…DWVH), 523–565 (DKLY…HPME), 566–609 (GTIY…DYAG), 610–652 (RRMY…FEDS), and 653–693 (LYWT…LHPQ). The N-linked (GlcNAc...) asparagine glycan is linked to asparagine 498. Positions 698–737 (GKNRCGDNNGGCTHLCLPSGQNYTCACPTGFRKINSHACA) constitute an EGF-like 3 domain. 3 cysteine pairs are disulfide-bonded: cysteine 702–cysteine 713, cysteine 709–cysteine 722, and cysteine 724–cysteine 736. N-linked (GlcNAc...) asparagine glycosylation is present at asparagine 719. 5 LDL-receptor class B repeats span residues 785 to 827 (DHVY…DWVT), 828 to 870 (NKLY…EPMG), 871 to 914 (GYMY…DYGS), 915 to 956 (QRLY…LYGQ), and 957 to 998 (RIYW…FHRQ). The N-linked (GlcNAc...) asparagine glycan is linked to asparagine 901. Residue asparagine 1077 is glycosylated (N-linked (GlcNAc...) asparagine). 10 LDL-receptor class B repeats span residues 1093–1135 (GKVY…DAIG), 1136–1178 (RKVY…YHEM), 1179–1222 (GFMY…DKTS), 1223–1263 (SQLL…LLDS), 1264–1306 (YIYW…DRAQ), 1397–1439 (GKVY…DWVA), 1440–1482 (RNLY…FPRK), 1483–1526 (GYLF…DYDT), 1527–1568 (RRIY…QDRW), and 1569–1610 (IYWT…SPQR). Asparagine 1415 and asparagine 1467 each carry an N-linked (GlcNAc...) asparagine glycan. Positions 1661–1696 (ATSMNEKSPVLPNTLPTTLHSSTTKTRTSLEGAGGR) are disordered. Over residues 1674–1690 (TLPTTLHSSTTKTRTSL) the composition is skewed to low complexity. A helical membrane pass occupies residues 1726 to 1746 (YAIGGLLSILLILLVIAALML). The Cytoplasmic segment spans residues 1747 to 1905 (YRHRKSKFTD…ERKLSSESQV (159 aa)). The interval 1852 to 1905 (ASSGSLDDTETEQLLQEEQSECSSVHTAATPERRGSLPDTGWKHERKLSSESQV) is disordered. Residues 1882–1905 (PERRGSLPDTGWKHERKLSSESQV) are compositionally biased toward basic and acidic residues.

Belongs to the LDLR family. Homooligomer. Interacts with MUSK; the heterodimer forms an AGRIN receptor complex that binds AGRIN resulting in activation of MUSK. Interacts (via the extracellular domain) with SOST; the interaction facilitates the inhibition of Wnt signaling. Interacts with MESD; the interaction promotes glycosylation of LRP4 and its cell-surface expression. In terms of processing, N-glycosylation is required for cell surface location.

Its subcellular location is the cell membrane. Its function is as follows. Mediates SOST-dependent inhibition of bone formation. Functions as a specific facilitator of SOST-mediated inhibition of Wnt signaling. Plays a key role in the formation and the maintenance of the neuromuscular junction (NMJ), the synapse between motor neuron and skeletal muscle. Directly binds AGRIN and recruits it to the MUSK signaling complex. Mediates the AGRIN-induced phosphorylation of MUSK, the kinase of the complex. The activation of MUSK in myotubes induces the formation of NMJ by regulating different processes including the transcription of specific genes and the clustering of AChR in the postsynaptic membrane. Alternatively, may be involved in the negative regulation of the canonical Wnt signaling pathway, being able to antagonize the LRP6-mediated activation of this pathway. More generally, has been proposed to function as a cell surface endocytic receptor binding and internalizing extracellular ligands for degradation by lysosomes. Plays an essential role in the process of digit differentiation. This is Low-density lipoprotein receptor-related protein 4 (Lrp4) from Mus musculus (Mouse).